A 736-amino-acid chain; its full sequence is Elongation factor 2 (736 aa).

In terms of domain architecture, tr-type G spans 18 to 261 (EQVRNIGITA…MVVKFIPNPR (244 aa)). GTP is bound by residues 27-34 (AHVDHGKT), 93-97 (DTPGH), and 147-150 (NKVD). Diphthamide is present on His-602.

It belongs to the TRAFAC class translation factor GTPase superfamily. Classic translation factor GTPase family. EF-G/EF-2 subfamily.

It is found in the cytoplasm. In terms of biological role, catalyzes the GTP-dependent ribosomal translocation step during translation elongation. During this step, the ribosome changes from the pre-translocational (PRE) to the post-translocational (POST) state as the newly formed A-site-bound peptidyl-tRNA and P-site-bound deacylated tRNA move to the P and E sites, respectively. Catalyzes the coordinated movement of the two tRNA molecules, the mRNA and conformational changes in the ribosome. This is Elongation factor 2 from Staphylothermus marinus (strain ATCC 43588 / DSM 3639 / JCM 9404 / F1).